A 724-amino-acid polypeptide reads, in one-letter code: Pesticidal crystal protein Cry11Ba (724 aa).

This sequence belongs to the delta endotoxin family.

In terms of biological role, promotes colloidosmotic lysis by binding to the midgut epithelial cells of mosquitos. Active on Aedes aegypti, Culex pipiens and Anopheles stephensi larvae. The sequence is that of Pesticidal crystal protein Cry11Ba (cry11Ba) from Bacillus thuringiensis subsp. jegathesan.